A 517-amino-acid chain; its full sequence is ATP synthase subunit alpha 2 (517 aa).

An ATP-binding site is contributed by 173-180; the sequence is GDRQTGKT.

It belongs to the ATPase alpha/beta chains family. As to quaternary structure, F-type ATPases have 2 components, CF(1) - the catalytic core - and CF(0) - the membrane proton channel. CF(1) has five subunits: alpha(3), beta(3), gamma(1), delta(1), epsilon(1). CF(0) has three main subunits: a(1), b(2) and c(9-12). The alpha and beta chains form an alternating ring which encloses part of the gamma chain. CF(1) is attached to CF(0) by a central stalk formed by the gamma and epsilon chains, while a peripheral stalk is formed by the delta and b chains.

It is found in the cell inner membrane. The catalysed reaction is ATP + H2O + 4 H(+)(in) = ADP + phosphate + 5 H(+)(out). Functionally, produces ATP from ADP in the presence of a proton gradient across the membrane. The alpha chain is a regulatory subunit. The chain is ATP synthase subunit alpha 2 from Legionella pneumophila (strain Corby).